The following is a 969-amino-acid chain: Defective in germ line development protein 3 (969 aa).

The tract at residues 34 to 81 is gld-2-binding; it reads MAENAASARKLFVSSALKDIIVNPENFYHDFQQSAQMAEDANQRRQVS. 5 KH domains span residues 34–109, 113–187, 189–259, 270–342, and 344–419; these read MAEN…MIEI, RVTL…MRRN, HFTV…NEIL, FTLH…IMDL, and PISM…YQKV. Residues 57 to 471 form a gls-1-binding region; that stretch reads PENFYHDFQQ…GSNGRRHRSS (415 aa). Disordered stretches follow at residues 459-508 and 602-711; these read LSDG…SFSE and EQHR…GDIH. Over residues 487-508 the composition is skewed to polar residues; it reads KQFSESSGGPSRSHTRVSSFSE. A compositionally biased stretch (low complexity) spans 631 to 644; the sequence is PSSSTGSYYPSTTP. A compositionally biased stretch (basic and acidic residues) spans 647–659; it reads RVYEQVREDDLRS. The segment covering 664–676 has biased composition (polar residues); that stretch reads RRTSVNGDDQNVE. 2 stretches are compositionally biased toward basic and acidic residues: residues 677–687 and 694–711; these read SMHDQGYERQY and LQKD…GDIH. Positions 769–969 are gls-1-binding; sequence LYMHESPHND…DLSLDETSTY (201 aa). Positions 860–949 are fbf-1-binding; the sequence is NGVTKTILEP…VLNEKEKEIA (90 aa). The interval 950-969 is disordered; sequence DKSIESTVTQDLSLDETSTY. A compositionally biased stretch (polar residues) spans 954–969; it reads ESTVTQDLSLDETSTY.

As to quaternary structure, interacts (via its KH1 domain) with gld-2. Isoform A but not isoform B interacts specifically with fbf-1 and fbf-2 in an RNA-independent manner. Isoform A interacts with gls-1 isoform C. As to expression, expressed in the germline (at protein level). In adult hermaphrodites, first detected in the transition zone (TZ), weakly expressed in the early mitotic region and in pachytene germ cells, and becomes more abundantly expressed as germ cells enter diakinesis (at protein level). Expressed in primary spermatocytes, but not in secondary spermatocytes or adult sperm (at protein level).

It localises to the cytoplasm. The protein localises to the cytoplasmic granule. It is found in the perinuclear region. Functionally, required maternally for germline survival and embryogenesis. Forms a complex with gls-1 which promotes the oogenic cell fate by freeing the translational repressor fbf to repress sperm promoting factors. Promotes maturation of primary spermatocytes to mature sperm. Required during hermaphrodite development to promote sperm fate, which is critical for determining the normal number of sperm. Promotion of sperm fate is at the expense of oogenesis, possibly through the negative regulation of fbf. Required during male development for the continued production of sperm and inhibition of oogenesis. Together with gld-2, promotes the transition from mitosis to meiosis. Required for polyadenylation of neg-1 mRNA during embryogenesis. The sequence is that of Defective in germ line development protein 3 from Caenorhabditis elegans.